Reading from the N-terminus, the 677-residue chain is Pentatricopeptide repeat-containing protein At5g39350 (677 aa).

PPR repeat units follow at residues 48–78, 79–113, 116–146, 151–181, 182–216, 217–251, 252–282, 283–317, 318–352, 353–383, 384–418, 419–453, 454–488, 489–523, 524–554, and 560–590; these read SGHI…MPQS, SLLS…GVKC, DGYT…ILRS, DKYV…MKNR, DVIS…SVDL, DHAT…RLGD, KIEV…MERR, DVIT…GVRP, NAVT…QVYS, DIII…ASKY, HTGP…DVEP, NIAT…GFMS, SLDA…HKSK, DVVL…GVTP, NEIT…MLEH, and RSNH…IPFE. The tract at residues 595-670 is type E motif; that stretch reads VWGALLAACV…KPGHSTIEIR (76 aa).

Belongs to the PPR family. PCMP-E subfamily.

This chain is Pentatricopeptide repeat-containing protein At5g39350 (PCMP-E16), found in Arabidopsis thaliana (Mouse-ear cress).